The chain runs to 724 residues: Phenylalanine ammonia-lyase (724 aa).

Tyr-99 (proton donor/acceptor) is an active-site residue. Residues 204-206 constitute a cross-link (5-imidazolinone (Ala-Gly)); sequence ASG. Ser-205 bears the 2,3-didehydroalanine (Ser) mark. (E)-cinnamate-binding residues include Asn-265, Gln-355, Arg-361, Asn-391, Lys-462, Glu-490, and Asn-493.

This sequence belongs to the PAL/histidase family. Homotetramer. Contains an active site 4-methylidene-imidazol-5-one (MIO), which is formed autocatalytically by cyclization and dehydration of residues Ala-Ser-Gly.

The protein resides in the cytoplasm. The enzyme catalyses L-phenylalanine = (E)-cinnamate + NH4(+). It functions in the pathway phenylpropanoid metabolism; trans-cinnamate biosynthesis; trans-cinnamate from L-phenylalanine: step 1/1. Its function is as follows. Catalyzes the non-oxidative deamination of L-phenylalanine to form trans-cinnamic acid and a free ammonium ion. Facilitates the commitment step in phenylpropanoid pathways that produce secondary metabolites such as lignins, coumarins and flavonoids. This Flammulina velutipes (Agaricus velutipes) protein is Phenylalanine ammonia-lyase.